A 908-amino-acid polypeptide reads, in one-letter code: Translation initiation factor IF-2 (908 aa).

Disordered stretches follow at residues 122–180 (PVVE…VDDA) and 203–267 (EKAR…AVKK). The span at 132–143 (VAAEPEVVEAPE) shows a compositional bias: acidic residues. Over residues 157-166 (EEPAAPAAPV) the composition is skewed to low complexity. Basic and acidic residues predominate over residues 223–248 (AKEDARPTKHVEDLAKLKKPHDKKDE). Residues 256–267 (KHNKKAGKAVKK) are compositionally biased toward basic residues. A tr-type G domain is found at 409-578 (PRAPIVTVMG…ALQAELLELS (170 aa)). The tract at residues 418 to 425 (GHVDHGKT) is G1. 418–425 (GHVDHGKT) serves as a coordination point for GTP. The segment at 443–447 (GITQH) is G2. The segment at 464–467 (DTPG) is G3. GTP is bound by residues 464–468 (DTPGH) and 518–521 (NKMD). Positions 518–521 (NKMD) are G4. The G5 stretch occupies residues 554 to 556 (SAH).

This sequence belongs to the TRAFAC class translation factor GTPase superfamily. Classic translation factor GTPase family. IF-2 subfamily.

Its subcellular location is the cytoplasm. Functionally, one of the essential components for the initiation of protein synthesis. Protects formylmethionyl-tRNA from spontaneous hydrolysis and promotes its binding to the 30S ribosomal subunits. Also involved in the hydrolysis of GTP during the formation of the 70S ribosomal complex. This is Translation initiation factor IF-2 from Saccharophagus degradans (strain 2-40 / ATCC 43961 / DSM 17024).